The primary structure comprises 386 residues: Bifunctional enzyme IspD/IspF (386 aa).

The interval 1-225 (MYNFVTLSIL…SCLSAPSSDT (225 aa)) is 2-C-methyl-D-erythritol 4-phosphate cytidylyltransferase. Positions 226–386 (LSGVGFDVHA…NLKYFDWTKI (161 aa)) are 2-C-methyl-D-erythritol 2,4-cyclodiphosphate synthase. The a divalent metal cation site is built by Asp-232 and His-234. 4-CDP-2-C-methyl-D-erythritol 2-phosphate is bound by residues 232 to 234 (DVH) and 258 to 259 (HS). Position 266 (His-266) interacts with a divalent metal cation. 4-CDP-2-C-methyl-D-erythritol 2-phosphate contacts are provided by residues 280 to 282 (DIG), 285 to 289 (FPDND), 356 to 359 (TTTE), Phe-363, and Arg-366.

It in the N-terminal section; belongs to the IspD/TarI cytidylyltransferase family. IspD subfamily. This sequence in the C-terminal section; belongs to the IspF family. A divalent metal cation is required as a cofactor.

It carries out the reaction 2-C-methyl-D-erythritol 4-phosphate + CTP + H(+) = 4-CDP-2-C-methyl-D-erythritol + diphosphate. It catalyses the reaction 4-CDP-2-C-methyl-D-erythritol 2-phosphate = 2-C-methyl-D-erythritol 2,4-cyclic diphosphate + CMP. It participates in isoprenoid biosynthesis; isopentenyl diphosphate biosynthesis via DXP pathway; isopentenyl diphosphate from 1-deoxy-D-xylulose 5-phosphate: step 2/6. The protein operates within isoprenoid biosynthesis; isopentenyl diphosphate biosynthesis via DXP pathway; isopentenyl diphosphate from 1-deoxy-D-xylulose 5-phosphate: step 4/6. In terms of biological role, bifunctional enzyme that catalyzes the formation of 4-diphosphocytidyl-2-C-methyl-D-erythritol from CTP and 2-C-methyl-D-erythritol 4-phosphate (MEP) (IspD), and catalyzes the conversion of 4-diphosphocytidyl-2-C-methyl-D-erythritol 2-phosphate (CDP-ME2P) to 2-C-methyl-D-erythritol 2,4-cyclodiphosphate (ME-CPP) with a corresponding release of cytidine 5-monophosphate (CMP) (IspF). The polypeptide is Bifunctional enzyme IspD/IspF (Sulfurimonas denitrificans (strain ATCC 33889 / DSM 1251) (Thiomicrospira denitrificans (strain ATCC 33889 / DSM 1251))).